Here is a 146-residue protein sequence, read N- to C-terminus: Prolactin-inducible protein homolog (146 aa).

The N-terminal stretch at M1 to A28 is a signal peptide. Q29 bears the Pyrrolidone carboxylic acid mark. 2 cysteine pairs are disulfide-bonded: C65/C91 and C89/C123. N-linked (GlcNAc...) asparagine glycosylation occurs at N105.

Belongs to the PIP family. As to quaternary structure, monomer. Interacts with AZGP1.

It is found in the secreted. The polypeptide is Prolactin-inducible protein homolog (PIP) (Pan troglodytes (Chimpanzee)).